The primary structure comprises 301 residues: Probable alpha-L-glutamate ligase (301 aa).

One can recognise an ATP-grasp domain in the interval 104–287 (LQLLSRKGIG…VAGMIFDFIE (184 aa)). Residues Lys141, 178-179 (EF), Asp187, and 211-213 (RSN) contribute to the ATP site. The Mg(2+) site is built by Asp248, Glu260, and Asn262. 3 residues coordinate Mn(2+): Asp248, Glu260, and Asn262.

It belongs to the RimK family. Requires Mg(2+) as cofactor. Mn(2+) serves as cofactor.

This is Probable alpha-L-glutamate ligase from Vibrio parahaemolyticus serotype O3:K6 (strain RIMD 2210633).